The following is a 345-amino-acid chain: Adenylosuccinate synthetase (345 aa).

GTP-binding positions include 18-24 (GDEGKGK) and 48-50 (GHT). Aspartate 19 (proton acceptor) is an active-site residue. 2 residues coordinate Mg(2+): aspartate 19 and glycine 48. IMP is bound by residues 19–22 (DEGK), 46–49 (NAGH), threonine 133, arginine 147, glutamine 185, threonine 200, and arginine 262. Histidine 49 functions as the Proton donor in the catalytic mechanism. 258 to 264 (TVTGRRR) contacts substrate. GTP-binding positions include arginine 264, 290–292 (GLD), and 330–332 (STG).

The protein belongs to the adenylosuccinate synthetase family. Homodimer. Mg(2+) is required as a cofactor.

The protein localises to the cytoplasm. The catalysed reaction is IMP + L-aspartate + GTP = N(6)-(1,2-dicarboxyethyl)-AMP + GDP + phosphate + 2 H(+). Its pathway is purine metabolism; AMP biosynthesis via de novo pathway; AMP from IMP: step 1/2. Its function is as follows. Plays an important role in the de novo pathway of purine nucleotide biosynthesis. Catalyzes the first committed step in the biosynthesis of AMP from IMP. This is Adenylosuccinate synthetase from Methanocaldococcus jannaschii (strain ATCC 43067 / DSM 2661 / JAL-1 / JCM 10045 / NBRC 100440) (Methanococcus jannaschii).